The primary structure comprises 241 residues: Peptidoglycan endopeptidase RipB (241 aa).

Positions 1 to 31 (MRHTRFHPIKLAWITAVVAGLMVGVATPADA) are cleaved as a signal peptide. Positions 109–241 (RQAVEYVIRR…TPFVTRIIEY (133 aa)) constitute a NlpC/P60 domain. Cys152 (nucleophile) is an active-site residue. Residue His201 is the Proton acceptor of the active site. Glu213 is an active-site residue.

This sequence belongs to the peptidase C40 family. Monomer.

Peptidoglycan endopeptidase that cleaves the bond between D-glutamate and meso-diaminopimelate. Binds high-molecular weight peptidoglycan, but does not degrade it. Required for normal separation of daughter cells after cell division and cell wall integrity. Required for host cell invasion. This Mycobacterium tuberculosis (strain CDC 1551 / Oshkosh) protein is Peptidoglycan endopeptidase RipB (ripB).